We begin with the raw amino-acid sequence, 252 residues long: Vitamin B12 import ATP-binding protein BtuD (252 aa).

Residues 2 to 237 enclose the ABC transporter domain; sequence IQIKSLSVGA…EQLESVFNTQ (236 aa). Residue 30-37 participates in ATP binding; it reads GPNGSGKS.

Belongs to the ABC transporter superfamily. Vitamin B12 importer (TC 3.A.1.13.1) family. As to quaternary structure, the complex is composed of two ATP-binding proteins (BtuD), two transmembrane proteins (BtuC) and a solute-binding protein (BtuF).

The protein resides in the cell inner membrane. It carries out the reaction an R-cob(III)alamin(out) + ATP + H2O = an R-cob(III)alamin(in) + ADP + phosphate + H(+). Functionally, part of the ABC transporter complex BtuCDF involved in vitamin B12 import. Responsible for energy coupling to the transport system. The chain is Vitamin B12 import ATP-binding protein BtuD from Vibrio atlanticus (strain LGP32) (Vibrio splendidus (strain Mel32)).